We begin with the raw amino-acid sequence, 1070 residues long: DNA-directed RNA polymerase subunit beta (1070 aa).

Belongs to the RNA polymerase beta chain family. In plastids the minimal PEP RNA polymerase catalytic core is composed of four subunits: alpha, beta, beta', and beta''. When a (nuclear-encoded) sigma factor is associated with the core the holoenzyme is formed, which can initiate transcription.

The protein localises to the plastid. Its subcellular location is the chloroplast. The enzyme catalyses RNA(n) + a ribonucleoside 5'-triphosphate = RNA(n+1) + diphosphate. DNA-dependent RNA polymerase catalyzes the transcription of DNA into RNA using the four ribonucleoside triphosphates as substrates. The polypeptide is DNA-directed RNA polymerase subunit beta (Citrus sinensis (Sweet orange)).